The primary structure comprises 632 residues: Chaperone protein HtpG (632 aa).

An a; substrate-binding region spans residues 1-339 (MTQQTMSFQA…SSDLPLNVSR (339 aa)). The b stretch occupies residues 340–559 (EILQESRDVK…DNDMSGYLQR (220 aa)). A c region spans residues 560–632 (MLKAAGQSAP…TNALLLSRAA (73 aa)).

The protein belongs to the heat shock protein 90 family. Homodimer.

The protein resides in the cytoplasm. Functionally, molecular chaperone. Has ATPase activity. The protein is Chaperone protein HtpG of Burkholderia pseudomallei (strain 668).